Reading from the N-terminus, the 50-residue chain is Metallothionein zym1 (50 aa).

Zn(2+) is bound by residues Cys7, Cys15, Cys17, Cys21, Cys23, Cys26, Cys30, Cys32, Cys40, Cys42, Cys45, and Cys47.

It belongs to the metallothionein superfamily.

It localises to the cytoplasm. The protein localises to the nucleus. Its function is as follows. Metallothionein involved in tolerance to zinc and cadmium. Binds four zinc ions. This is Metallothionein zym1 (zym1) from Schizosaccharomyces pombe (strain 972 / ATCC 24843) (Fission yeast).